The following is a 128-amino-acid chain: Cionin (128 aa).

The first 22 residues, 1-22 (MGSNIVIYFSIIVIVTLNVNGV), serve as a signal peptide directing secretion. The propeptide occupies 23-108 (PASDLFKSVS…NQGHMQRMDR (86 aa)). 2 positions are modified to sulfotyrosine: Tyr-110 and Tyr-111. Position 116 is a phenylalanine amide (Phe-116). A propeptide spanning residues 120-128 (AIEDVDYEY) is cleaved from the precursor.

It belongs to the gastrin/cholecystokinin family. In terms of tissue distribution, expressed in both the gut and the neural ganglion.

It is found in the secreted. The sequence is that of Cionin from Ciona intestinalis (Transparent sea squirt).